The following is a 222-amino-acid chain: Ribosomal RNA small subunit methyltransferase G (222 aa).

S-adenosyl-L-methionine-binding positions include glycine 84, phenylalanine 89, 141–142 (VE), and arginine 154.

This sequence belongs to the methyltransferase superfamily. RNA methyltransferase RsmG family.

The protein localises to the cytoplasm. The catalysed reaction is guanosine(527) in 16S rRNA + S-adenosyl-L-methionine = N(7)-methylguanosine(527) in 16S rRNA + S-adenosyl-L-homocysteine. In terms of biological role, specifically methylates the N7 position of guanine in position 527 of 16S rRNA. The polypeptide is Ribosomal RNA small subunit methyltransferase G (Bradyrhizobium sp. (strain BTAi1 / ATCC BAA-1182)).